Consider the following 409-residue polypeptide: uncharacterized protein (409 aa).

The 270-residue stretch at 5 to 274 (ILIGFVGKPS…LAKQGFVKYE (270 aa)) folds into the OBG-type G domain. GTP contacts are provided by residues 11–18 (GKPSSGKS) and 83–87 (DVAGL).

The protein belongs to the TRAFAC class OBG-HflX-like GTPase superfamily. OBG GTPase family.

It is found in the cytoplasm. The protein localises to the nucleus. This is an uncharacterized protein from Schizosaccharomyces pombe (strain 972 / ATCC 24843) (Fission yeast).